Consider the following 131-residue polypeptide: S-adenosylmethionine decarboxylase proenzyme (131 aa).

Ser64 acts as the Schiff-base intermediate with substrate; via pyruvic acid in catalysis. Ser64 carries the pyruvic acid (Ser); by autocatalysis modification. His69 acts as the Proton acceptor; for processing activity in catalysis. Cys84 functions as the Proton donor; for catalytic activity in the catalytic mechanism.

The protein belongs to the prokaryotic AdoMetDC family. Type 1 subfamily. As to quaternary structure, heterotetramer of two alpha and two beta chains arranged as a dimer of alpha/beta heterodimers. Requires pyruvate as cofactor. Post-translationally, is synthesized initially as an inactive proenzyme. Formation of the active enzyme involves a self-maturation process in which the active site pyruvoyl group is generated from an internal serine residue via an autocatalytic post-translational modification. Two non-identical subunits are generated from the proenzyme in this reaction, and the pyruvate is formed at the N-terminus of the alpha chain, which is derived from the carboxyl end of the proenzyme. The post-translation cleavage follows an unusual pathway, termed non-hydrolytic serinolysis, in which the side chain hydroxyl group of the serine supplies its oxygen atom to form the C-terminus of the beta chain, while the remainder of the serine residue undergoes an oxidative deamination to produce ammonia and the pyruvoyl group blocking the N-terminus of the alpha chain.

The enzyme catalyses S-adenosyl-L-methionine + H(+) = S-adenosyl 3-(methylsulfanyl)propylamine + CO2. It participates in amine and polyamine biosynthesis; S-adenosylmethioninamine biosynthesis; S-adenosylmethioninamine from S-adenosyl-L-methionine: step 1/1. Functionally, catalyzes the decarboxylation of S-adenosylmethionine to S-adenosylmethioninamine (dcAdoMet), the propylamine donor required for the synthesis of the polyamines spermine and spermidine from the diamine putrescine. This chain is S-adenosylmethionine decarboxylase proenzyme, found in Thermoplasma acidophilum (strain ATCC 25905 / DSM 1728 / JCM 9062 / NBRC 15155 / AMRC-C165).